Consider the following 852-residue polypeptide: Chitin synthase 1 (852 aa).

Disordered regions lie at residues 27 to 46 (EDQD…TNYA) and 53 to 97 (SSLR…QANG). Over residues 53–74 (SSLRSQKSANKPTTAQNRNSAA) the composition is skewed to polar residues. The next 7 helical transmembrane spans lie at 492–509 (RWLN…IHFR), 532–552 (VISL…FYFI), 572–592 (IFDF…ICSM), 601–621 (FLFM…LFCS), 686–706 (FLPY…YAFC), 787–807 (THLV…ITTS), and 830–850 (CGLG…GIFT).

This sequence belongs to the chitin synthase family. Class II subfamily.

It is found in the cell membrane. It carries out the reaction [(1-&gt;4)-N-acetyl-beta-D-glucosaminyl](n) + UDP-N-acetyl-alpha-D-glucosamine = [(1-&gt;4)-N-acetyl-beta-D-glucosaminyl](n+1) + UDP + H(+). Functionally, polymerizes chitin, a structural polymer of the cell wall and septum, by transferring the sugar moiety of UDP-GlcNAc to the non-reducing end of the growing chitin polymer. The protein is Chitin synthase 1 (CHS1) of Mucor circinelloides f. lusitanicus (Mucor racemosus var. lusitanicus).